We begin with the raw amino-acid sequence, 267 residues long: Protein TIFY 7 (267 aa).

The region spanning 113–148 (SSGSSPQLTIFYGGTISVFNDISPDKAQAIMLCAGN) is the Tify domain. Positions 220–244 (PQARKASLARFLEKRKERLMSAMPY) match the Jas motif. Positions 222-229 (ARKASLAR) match the Nuclear localization signal motif.

Belongs to the TIFY/JAZ family. Homo- and heterodimer. Interacts with MYC2, MYC3, MYC4, COI1, AFPH2/NINJA, TIFY10A/JAZ1, TIFY10B/JAZ2, TIFY6B/JAZ3, TIFY5A/JAZ8, TIFY9/JAZ10 and TIFY3A/JAZ11. Interacts with RHD6 and RSL1. Post-translationally, ubiquitinated. Targeted for degradation by the SCF(COI1) E3 ubiquitin ligase-proteasome pathway during jasmonate signaling.

It is found in the nucleus. Functionally, repressor of jasmonate responses. Jasmonoyl-isoleucine (JA-Ile) specifically promotes COI1-TIFY7/JAZ9 interaction. Interacts with and suppresses RHD6 and RSL1 transcription factor activities to negatively regulate jasmonate-stimulated root hair development. The polypeptide is Protein TIFY 7 (TIFY7) (Arabidopsis thaliana (Mouse-ear cress)).